Consider the following 89-residue polypeptide: Transcriptional regulator WhiB2 (89 aa).

Over residues 1–15 (MVPEAPAPFEEPLPP) the composition is skewed to pro residues. The disordered stretch occupies residues 1-24 (MVPEAPAPFEEPLPPEATDQWQDR). One can recognise a 4Fe-4S Wbl-type domain in the interval 26–83 (LCAQTDPEAFFPEKGGSTREAKKICMGCEVRHECLEYALAHDERFGIWGGLSERERRR). Cysteine 27 is a binding site for [4Fe-4S] cluster. Serine 42 carries the phosphoserine modification. Residues cysteine 50, cysteine 53, and cysteine 59 each coordinate [4Fe-4S] cluster.

This sequence belongs to the WhiB family. The cofactor is [4Fe-4S] cluster. In terms of processing, may be phosphorylated, possibly on Ser-42. The cluster is degraded quickly in the presence of air. Upon cluster removal intramolecular disulfide bonds are formed. Post-translationally, the Fe-S cluster can be nitrosylated by nitric oxide (NO).

The protein localises to the cytoplasm. In terms of biological role, acts as a transcriptional regulator. Probably redox-responsive. The apo- but not holo-form probably binds DNA. Its function is as follows. The apo-form functions as a chaperone, preventing aggregation or helping in correct refolding of a number of substrates; this activity does not require ATP or the ability to bind a Fe-S cluster. Chaperone activity is insensitive to the redox state of its cysteine residues. The apo-form has no protein disulfide reductase activity. The apo-form binds to its own promoter. The chain is Transcriptional regulator WhiB2 (whiB2) from Mycobacterium tuberculosis (strain ATCC 25618 / H37Rv).